The sequence spans 352 residues: Heat-inducible transcription repressor HrcA (352 aa).

This sequence belongs to the HrcA family.

In terms of biological role, negative regulator of class I heat shock genes (grpE-dnaK-dnaJ and groELS operons). Prevents heat-shock induction of these operons. This Lactobacillus gasseri (strain ATCC 33323 / DSM 20243 / BCRC 14619 / CIP 102991 / JCM 1131 / KCTC 3163 / NCIMB 11718 / NCTC 13722 / AM63) protein is Heat-inducible transcription repressor HrcA.